Reading from the N-terminus, the 825-residue chain is Heterogeneous nuclear ribonucleoprotein U (825 aa).

Residue S2 is modified to N-acetylserine; partial. The residue at position 4 (S4) is a Phosphoserine. Residues 8-42 (VKKLKVSELKEELKKRRLSDKGLKAELMERLQAAL) form the SAP domain. An N6-acetyllysine mark is found at K17 and K21. The segment at 41–281 (ALDDEEAGGR…PQPPVEEEDE (241 aa)) is disordered. Position 59 is a phosphoserine; by PLK1 (S59). Residue S66 is modified to Phosphoserine. Residues 72-81 (AGLEQEAAAG) show a composition bias toward low complexity. Acidic residues-rich tracts occupy residues 82–95 (GDEE…EEEG), 120–134 (PMEE…ENGD), and 140–153 (EGED…EGAG). A compositionally biased stretch (low complexity) spans 159–178 (GEQQPQPPATQQQQPQQQRG). K186 bears the N6-acetyllysine mark. The residue at position 187 (S187) is an ADP-ribosylserine. A compositionally biased stretch (low complexity) spans 199-211 (APPGARQGQQQAG). At K215 the chain carries N6-acetyllysine. Residues 233–266 (GKTEQKGGDKKRGVKRPREDHGRGYFEYIEENKY) are compositionally biased toward basic and acidic residues. A Citrulline modification is found at R255. K265 is modified (N6-acetyllysine; alternate). Residue K265 forms a Glycyl lysine isopeptide (Lys-Gly) (interchain with G-Cter in SUMO1); alternate linkage. Residue K265 forms a Glycyl lysine isopeptide (Lys-Gly) (interchain with G-Cter in SUMO2); alternate linkage. Phosphotyrosine is present on Y266. A phosphoserine mark is found at S267 and S271. A B30.2/SPRY domain is found at 267-464 (SRAKSPQPPV…VEFNFGQKEK (198 aa)). T286 is modified (phosphothreonine). K352 carries the N6-acetyllysine modification. Positions 488–672 (PKGPEEKKDC…QKLLEQYKEE (185 aa)) are ATPase domain. A Glycyl lysine isopeptide (Lys-Gly) (interchain with G-Cter in SUMO2) cross-link involves residue K495. 504–511 (GLPGAGKT) serves as a coordination point for ATP. N6-acetyllysine; alternate is present on residues K516 and K524. Residues K516 and K524 each participate in a glycyl lysine isopeptide (Lys-Gly) (interchain with G-Cter in SUMO2); alternate cross-link. At T532 the chain carries Phosphothreonine. A Glycyl lysine isopeptide (Lys-Gly) (interchain with G-Cter in SUMO2) cross-link involves residue K536. Position 551 is an N6-acetyllysine (K551). An N6-acetyllysine; alternate modification is found at K565. A Glycyl lysine isopeptide (Lys-Gly) (interchain with G-Cter in SUMO2); alternate cross-link involves residue K565. A Glycyl lysine isopeptide (Lys-Gly) (interchain with G-Cter in SUMO2) cross-link involves residue K574. Phosphothreonine is present on T582. Residues K609 and K626 each participate in a glycyl lysine isopeptide (Lys-Gly) (interchain with G-Cter in SUMO2) cross-link. The actin-binding stretch occupies residues 611 to 626 (EDYKQRTQKKAEVEGK). At K635 the chain carries N6-acetyllysine; alternate. K635 participates in a covalent cross-link: Glycyl lysine isopeptide (Lys-Gly) (interchain with G-Cter in SUMO2); alternate. Residues K664 and K670 each participate in a glycyl lysine isopeptide (Lys-Gly) (interchain with G-Cter in SUMO2) cross-link. Over residues 671–683 (EESKKALPPEKKQ) the composition is skewed to basic and acidic residues. The disordered stretch occupies residues 671–749 (EESKKALPPE…GGGGGGSGGI (79 aa)). At R702 the chain carries Omega-N-methylarginine. Positions 710–728 (GGFNMRGGNFRGGAPGNRG) are enriched in gly residues. Positions 714–739 (MRGGNFRGGAPGNRGGYNRRGNMPQR) are RNA-binding RGG-box. An asymmetric dimethylarginine mark is found at R715, R720, and R727. Residues R733 and R739 each carry the asymmetric dimethylarginine; alternate modification. R733 and R739 each carry omega-N-methylarginine; alternate. R739 carries the post-translational modification Dimethylated arginine; in A2780 ovarian carcinoma cell line. A compositionally biased stretch (gly residues) spans 739-749 (RGGGGGGSGGI). Asymmetric dimethylarginine occurs at positions 755 and 762. The segment at 769 to 799 (GNYNRGGMPNRGNYNQNFRGRGNNRGYKNQS) is disordered. The span at 778–799 (NRGNYNQNFRGRGNNRGYKNQS) shows a compositional bias: low complexity. N6-acetyllysine; alternate is present on K814. Residue K814 forms a Glycyl lysine isopeptide (Lys-Gly) (interchain with G-Cter in SUMO2); alternate linkage.

In terms of assembly, oligomer (via ATPase domain and RNA-binding RGG-box region); oligomerization occurs upon ATP-binding in a chromatin-associated RNAs (caRNAs)- and transcription-dependent manner and is required for chromatin decompaction. ATP hydrolysis is required to cycle from an oligomeric to monomeric state to compact chromatin. Component of the coding region determinant (CRD)-mediated complex, composed of DHX9, HNRNPU, IGF2BP1, SYNCRIP and YBX1. Identified in the spliceosome C complex. Identified in a IGF2BP1-dependent mRNP granule complex containing untranslated mRNAs. Associates with heterogeneous nuclear ribonucleoprotein (hnRNP) particles. Associates (via middle region) with the C-terminal domain (CTD) RNA polymerase II (Pol II) holoenzyme; this association occurs in a RNA-independent manner. Associates (via middle region) with the core-TFIIH basal transcription factor complex; this association inhibits the CTD phosphorylation of RNA polymerase II holoenzyme by down-regulating TFIIH kinase activity. Associates with the telomerase holoenzyme complex. Associates with spindle microtubules (MTs) in a TPX2-dependent manner. Interacts (via C-terminus) with actin; this interaction is direct and mediates association with the phosphorylated CTD of RNA polymerase II and is disrupted in presence of the long non-coding H19 RNA. Interacts with AURKA. Interacts (via C-terminus) with CBX5; this interaction is, at least in part, RNA-dependent. Interacts with CR2. Interacts with CRY1. Interacts (via C-terminus) with EP300; this interaction enhances DNA-binding to nuclear scaffold/matrix attachment region (S/MAR) elements. Interacts with ERBB4. Interacts with GEMIN5. Interacts with IGF2BP1. Interacts with IGF2BP2 and IGF2BP3. Interacts with NCL; this interaction occurs during mitosis. Interacts (via C-terminus) with NR3C1 (via C-terminus). Interacts with PLK1; this interaction induces phosphorylation of HNRNPU at Ser-59 in mitosis. Interacts with POU3F4. Interacts with SMARCA4; this interaction occurs in embryonic stem cells and stimulates global Pol II-mediated transcription. Interacts (via C-terminus) with TOP2A; this interaction protects the topoisomerase TOP2A from degradation and positively regulates the relaxation of supercoiled DNA by TOP2A in a RNA-dependent manner. Interacts with TPX2; this interaction recruits HNRNPU to spindle microtubules (MTs). Interacts with UBQLN2. Interacts (via RNA-binding RGG-box region) with ZBTB7B; the interaction facilitates the recruitment of long non-coding RNA Blnc1 by ZBTB7B. Interacts with ERCC6. (Microbial infection) Interacts with HIV-1 protein Rev. Cleaved at Asp-100 by CASP3 during T-cell apoptosis, resulting in a loss of DNA- and chromatin-binding activities. Post-translationally, extensively phosphorylated. Phosphorylated on Ser-59 by PLK1 and dephosphorylated by protein phosphatase 2A (PP2A) in mitosis. In terms of processing, arg-739 is dimethylated, probably to asymmetric dimethylarginine. Arg-733 is dimethylated, probably to asymmetric dimethylarginine. Citrullinated by PADI4. Widely expressed.

The protein localises to the nucleus. It is found in the nucleus matrix. Its subcellular location is the chromosome. The protein resides in the nucleus speckle. It localises to the cytoplasm. The protein localises to the cytoskeleton. It is found in the microtubule organizing center. Its subcellular location is the centrosome. The protein resides in the centromere. It localises to the kinetochore. The protein localises to the spindle. It is found in the spindle pole. Its subcellular location is the midbody. The protein resides in the cell surface. It localises to the cytoplasmic granule. DNA- and RNA-binding protein involved in several cellular processes such as nuclear chromatin organization, telomere-length regulation, transcription, mRNA alternative splicing and stability, Xist-mediated transcriptional silencing and mitotic cell progression. Plays a role in the regulation of interphase large-scale gene-rich chromatin organization through chromatin-associated RNAs (caRNAs) in a transcription-dependent manner, and thereby maintains genomic stability. Required for the localization of the long non-coding Xist RNA on the inactive chromosome X (Xi) and the subsequent initiation and maintenance of X-linked transcriptional gene silencing during X-inactivation. Plays a role as a RNA polymerase II (Pol II) holoenzyme transcription regulator. Promotes transcription initiation by direct association with the core-TFIIH basal transcription factor complex for the assembly of a functional pre-initiation complex with Pol II in a actin-dependent manner. Blocks Pol II transcription elongation activity by inhibiting the C-terminal domain (CTD) phosphorylation of Pol II and dissociates from Pol II pre-initiation complex prior to productive transcription elongation. Positively regulates CBX5-induced transcriptional gene silencing and retention of CBX5 in the nucleus. Negatively regulates glucocorticoid-mediated transcriptional activation. Key regulator of transcription initiation and elongation in embryonic stem cells upon leukemia inhibitory factor (LIF) signaling. Involved in the long non-coding RNA H19-mediated Pol II transcriptional repression. Participates in the circadian regulation of the core clock component BMAL1 transcription. Plays a role in the regulation of telomere length. Plays a role as a global pre-mRNA alternative splicing modulator by regulating U2 small nuclear ribonucleoprotein (snRNP) biogenesis. Plays a role in mRNA stability. Component of the CRD-mediated complex that promotes MYC mRNA stabilization. Enhances the expression of specific genes, such as tumor necrosis factor TNFA, by regulating mRNA stability, possibly through binding to the 3'-untranslated region (UTR). Plays a role in mitotic cell cycle regulation. Involved in the formation of stable mitotic spindle microtubules (MTs) attachment to kinetochore, spindle organization and chromosome congression. Phosphorylation at Ser-59 by PLK1 is required for chromosome alignement and segregation and progression through mitosis. Also contributes to the targeting of AURKA to mitotic spindle MTs. Binds to double- and single-stranded DNA and RNA, poly(A), poly(C) and poly(G) oligoribonucleotides. Binds to chromatin-associated RNAs (caRNAs). Associates with chromatin to scaffold/matrix attachment region (S/MAR) elements in a chromatin-associated RNAs (caRNAs)-dependent manner. Binds to the Xist RNA. Binds the long non-coding H19 RNA. Binds to SMN1/2 pre-mRNAs at G/U-rich regions. Binds to small nuclear RNAs (snRNAs). Binds to the 3'-UTR of TNFA mRNA. Binds (via RNA-binding RGG-box region) to the long non-coding Xist RNA; this binding is direct and bridges the Xist RNA and the inactive chromosome X (Xi). Also negatively regulates embryonic stem cell differentiation upon LIF signaling. Required for embryonic development. Binds to brown fat long non-coding RNA 1 (Blnc1); facilitates the recruitment of Blnc1 by ZBTB7B required to drive brown and beige fat development and thermogenesis. In terms of biological role, (Microbial infection) Negatively regulates immunodeficiency virus type 1 (HIV-1) replication by preventing the accumulation of viral mRNA transcripts in the cytoplasm. The polypeptide is Heterogeneous nuclear ribonucleoprotein U (Homo sapiens (Human)).